The sequence spans 376 residues: Lipoyl synthase 2, mitochondrial (376 aa).

Positions 109, 114, 120, 140, 144, 147, and 356 each coordinate [4Fe-4S] cluster. The 221-residue stretch at 125–345 folds into the Radical SAM core domain; that stretch reads ETGTATATIM…QTLGMEMGFR (221 aa).

Belongs to the radical SAM superfamily. Lipoyl synthase family. The cofactor is [4Fe-4S] cluster.

The protein localises to the mitochondrion. The catalysed reaction is [[Fe-S] cluster scaffold protein carrying a second [4Fe-4S](2+) cluster] + N(6)-octanoyl-L-lysyl-[protein] + 2 oxidized [2Fe-2S]-[ferredoxin] + 2 S-adenosyl-L-methionine + 4 H(+) = [[Fe-S] cluster scaffold protein] + N(6)-[(R)-dihydrolipoyl]-L-lysyl-[protein] + 4 Fe(3+) + 2 hydrogen sulfide + 2 5'-deoxyadenosine + 2 L-methionine + 2 reduced [2Fe-2S]-[ferredoxin]. Its pathway is protein modification; protein lipoylation via endogenous pathway; protein N(6)-(lipoyl)lysine from octanoyl-[acyl-carrier-protein]: step 2/2. In terms of biological role, catalyzes the radical-mediated insertion of two sulfur atoms into the C-6 and C-8 positions of the octanoyl moiety bound to the lipoyl domains of lipoate-dependent enzymes, thereby converting the octanoylated domains into lipoylated derivatives. The polypeptide is Lipoyl synthase 2, mitochondrial (Pisum sativum (Garden pea)).